Reading from the N-terminus, the 784-residue chain is LPS-assembly protein LptD (784 aa).

The N-terminal stretch at 1–24 (MKKRIPTLLATMIATALYSQQGLA) is a signal peptide. 2 disulfides stabilise this stretch: Cys-31-Cys-724 and Cys-173-Cys-725.

This sequence belongs to the LptD family. Component of the lipopolysaccharide transport and assembly complex. Interacts with LptE and LptA. In terms of processing, contains two intramolecular disulfide bonds.

It is found in the cell outer membrane. Functionally, together with LptE, is involved in the assembly of lipopolysaccharide (LPS) at the surface of the outer membrane. This Shigella flexneri protein is LPS-assembly protein LptD.